A 638-amino-acid chain; its full sequence is 1-deoxy-D-xylulose-5-phosphate synthase (638 aa).

Thiamine diphosphate is bound by residues histidine 79 and 120 to 122 (AHS). Aspartate 151 provides a ligand contact to Mg(2+). Thiamine diphosphate contacts are provided by residues 152 to 153 (GA), asparagine 180, tyrosine 289, and glutamate 371. Asparagine 180 serves as a coordination point for Mg(2+).

The protein belongs to the transketolase family. DXPS subfamily. As to quaternary structure, homodimer. Mg(2+) serves as cofactor. It depends on thiamine diphosphate as a cofactor.

It carries out the reaction D-glyceraldehyde 3-phosphate + pyruvate + H(+) = 1-deoxy-D-xylulose 5-phosphate + CO2. Its pathway is metabolic intermediate biosynthesis; 1-deoxy-D-xylulose 5-phosphate biosynthesis; 1-deoxy-D-xylulose 5-phosphate from D-glyceraldehyde 3-phosphate and pyruvate: step 1/1. Functionally, catalyzes the acyloin condensation reaction between C atoms 2 and 3 of pyruvate and glyceraldehyde 3-phosphate to yield 1-deoxy-D-xylulose-5-phosphate (DXP). This is 1-deoxy-D-xylulose-5-phosphate synthase from Rhizobium leguminosarum bv. trifolii (strain WSM2304).